The primary structure comprises 49 residues: Thymopoietin-1 (49 aa).

The LEM-like domain occupies Leu4 to Leu47. The interval Arg32 to Tyr36 is biological activity.

It belongs to the thymopoietin family.

In terms of biological role, hormone of the thymus with pleiotropic actions on prothymocytes, mature T-cells, the nicotinic acetylcholine receptor, and pituitary corticotrophs. The sequence is that of Thymopoietin-1 from Bos taurus (Bovine).